Reading from the N-terminus, the 200-residue chain is 3-isopropylmalate dehydratase small subunit (200 aa).

It belongs to the LeuD family. LeuD type 1 subfamily. As to quaternary structure, heterodimer of LeuC and LeuD.

It carries out the reaction (2R,3S)-3-isopropylmalate = (2S)-2-isopropylmalate. Its pathway is amino-acid biosynthesis; L-leucine biosynthesis; L-leucine from 3-methyl-2-oxobutanoate: step 2/4. In terms of biological role, catalyzes the isomerization between 2-isopropylmalate and 3-isopropylmalate, via the formation of 2-isopropylmaleate. This is 3-isopropylmalate dehydratase small subunit from Yersinia pestis bv. Antiqua (strain Antiqua).